We begin with the raw amino-acid sequence, 213 residues long: Uridine kinase (213 aa).

13-20 (GASASGKS) serves as a coordination point for ATP.

The protein belongs to the uridine kinase family.

Its subcellular location is the cytoplasm. It carries out the reaction uridine + ATP = UMP + ADP + H(+). The catalysed reaction is cytidine + ATP = CMP + ADP + H(+). Its pathway is pyrimidine metabolism; CTP biosynthesis via salvage pathway; CTP from cytidine: step 1/3. It participates in pyrimidine metabolism; UMP biosynthesis via salvage pathway; UMP from uridine: step 1/1. This is Uridine kinase from Histophilus somni (strain 129Pt) (Haemophilus somnus).